The chain runs to 275 residues: Protein FAM210A (275 aa).

Residues 68 to 108 (SSQPADTPRKVPEEREPLTSATEVPKQSPVESDASDPDPLQ) form a disordered region. Residues 74–84 (TPRKVPEEREP) show a composition bias toward basic and acidic residues. The DUF1279 domain occupies 109–221 (DKSISLVQRF…GYMSTPPPVK (113 aa)). Residues 128–148 (VMIPVHLVTSTVWFGSFYYAA) form a helical membrane-spanning segment. Residues 221 to 271 (KEYLQDRMEETKDKITEKMEETKDKITEKMEETKDKITEKIQETKDKVSFK) adopt a coiled-coil conformation.

It belongs to the FAM210 family. Interacts with ATAD3A.

The protein localises to the membrane. It localises to the mitochondrion. Its subcellular location is the cytoplasm. May play a role in the structure and strength of both muscle and bone. This chain is Protein FAM210A (FAM210A), found in Gallus gallus (Chicken).